Here is a 247-residue protein sequence, read N- to C-terminus: Phosphoglycerate mutase 1 (247 aa).

Residues 8–15 and 21–22 contribute to the substrate site; these read RHGQSEWN and TG. The active-site Tele-phosphohistidine intermediate is the His9. Ser12 is subject to Phosphoserine. A Glycyl lysine isopeptide (Lys-Gly) (interchain with G-Cter in ubiquitin) cross-link involves residue Lys31. Phosphotyrosine is present on Tyr49. Lys57 participates in a covalent cross-link: Glycyl lysine isopeptide (Lys-Gly) (interchain with G-Cter in ubiquitin). Residue Arg60 participates in substrate binding. Lys71 is covalently cross-linked (Glycyl lysine isopeptide (Lys-Gly) (interchain with G-Cter in ubiquitin)). Glu87 serves as the catalytic Proton donor/acceptor. Residues 87–90, Lys98, and 114–115 each bind substrate; these read ERHY and RR. Phosphoserine is present on residues Ser116, Ser127, and Ser128. Residues Lys139 and Lys175 each participate in a glycyl lysine isopeptide (Lys-Gly) (interchain with G-Cter in ubiquitin) cross-link. 183–184 provides a ligand contact to substrate; the sequence is GN. Phosphoserine is present on Ser185. Residue Lys191 forms a Glycyl lysine isopeptide (Lys-Gly) (interchain with G-Cter in ubiquitin) linkage. Ser197 carries the phosphoserine modification.

The protein belongs to the phosphoglycerate mutase family. BPG-dependent PGAM subfamily. As to quaternary structure, homotetramer: dimer of dimers.

Its subcellular location is the cytoplasm. It localises to the mitochondrion outer membrane. It is found in the mitochondrion intermembrane space. It carries out the reaction (2R)-2-phosphoglycerate = (2R)-3-phosphoglycerate. It functions in the pathway carbohydrate degradation; glycolysis; pyruvate from D-glyceraldehyde 3-phosphate: step 3/5. Its activity is regulated as follows. Inhibited by inositol hexakisphosphate and benzene tri-, tetra- and hexacarboxylates. Interconversion of 3- and 2-phosphoglycerate with 2,3-bisphosphoglycerate as the primer of the reaction. Can also catalyze the reaction of EC 5.4.2.4 (synthase), but with a reduced activity. This Saccharomyces cerevisiae (strain ATCC 204508 / S288c) (Baker's yeast) protein is Phosphoglycerate mutase 1 (GPM1).